Here is a 326-residue protein sequence, read N- to C-terminus: Mitochondrial glycine transporter (326 aa).

Solcar repeat units lie at residues 45-134, 141-225, and 237-321; these read HPVI…SKQY, PTAL…TRTA, and LIPL…MMAR. The next 6 membrane-spanning stretches (helical) occupy residues 51–76, 109–135, 147–172, 200–223, 241–267, and 296–314; these read FLCGSISGTCSTLLFQPLDLLKTRLQ, GMSPSIVRCVPGVGIYFGTLYSSKQYF, VILGMGSRSVAGVCMSPITVIKTRYE, GLTATLLRDAPFSGLYLMFYSQTR, INFSCGIFAGVLASLVTQPADVIKTHM, and GSVPRALRRTLMAAMAWTV.

The protein belongs to the mitochondrial carrier (TC 2.A.29) family. SLC25A38 subfamily.

It localises to the mitochondrion inner membrane. It catalyses the reaction glycine(in) = glycine(out). In terms of biological role, mitochondrial glycine transporter that imports glycine into the mitochondrial matrix. Plays an important role in providing glycine for the first enzymatic step in heme biosynthesis, the condensation of glycine with succinyl-CoA to produce 5-aminolevulinate (ALA) in the mitochondrial matrix. Required during erythropoiesis. Its function is as follows. Plays a role as pro-apoptotic protein that induces caspase-dependent apoptosis. This is Mitochondrial glycine transporter from Mus musculus (Mouse).